The chain runs to 61 residues: Large ribosomal subunit protein uL30 (61 aa).

This sequence belongs to the universal ribosomal protein uL30 family. As to quaternary structure, part of the 50S ribosomal subunit.

The chain is Large ribosomal subunit protein uL30 from Francisella tularensis subsp. tularensis (strain FSC 198).